Consider the following 307-residue polypeptide: Ornithine carbamoyltransferase (307 aa).

Carbamoyl phosphate is bound by residues 51–54 (STRT), Q78, R102, and 129–132 (HPVQ). L-ornithine is bound by residues N159, D223, and 227 to 228 (SM). Carbamoyl phosphate is bound by residues 263–264 (CL) and R291.

It belongs to the aspartate/ornithine carbamoyltransferase superfamily. OTCase family.

The protein resides in the cytoplasm. It catalyses the reaction carbamoyl phosphate + L-ornithine = L-citrulline + phosphate + H(+). Its pathway is amino-acid biosynthesis; L-arginine biosynthesis; L-arginine from L-ornithine and carbamoyl phosphate: step 1/3. Reversibly catalyzes the transfer of the carbamoyl group from carbamoyl phosphate (CP) to the N(epsilon) atom of ornithine (ORN) to produce L-citrulline. The sequence is that of Ornithine carbamoyltransferase from Wolinella succinogenes (strain ATCC 29543 / DSM 1740 / CCUG 13145 / JCM 31913 / LMG 7466 / NCTC 11488 / FDC 602W) (Vibrio succinogenes).